Here is a 316-residue protein sequence, read N- to C-terminus: Ribonuclease Z (316 aa).

The Zn(2+) site is built by H59, H61, D63, H64, H135, D203, and H261. D63 serves as the catalytic Proton acceptor.

Belongs to the RNase Z family. In terms of assembly, homodimer. It depends on Zn(2+) as a cofactor.

The catalysed reaction is Endonucleolytic cleavage of RNA, removing extra 3' nucleotides from tRNA precursor, generating 3' termini of tRNAs. A 3'-hydroxy group is left at the tRNA terminus and a 5'-phosphoryl group is left at the trailer molecule.. In terms of biological role, zinc phosphodiesterase, which displays some tRNA 3'-processing endonuclease activity. Probably involved in tRNA maturation, by removing a 3'-trailer from precursor tRNA. This Nanoarchaeum equitans (strain Kin4-M) protein is Ribonuclease Z.